The chain runs to 446 residues: Forkhead box protein F2 (446 aa).

Over residues 1–18 the composition is skewed to pro residues; the sequence is MSTEGGPPPPPPRPPPAP. The segment at 1 to 97 is disordered; it reads MSTEGGPPPP…TKKATSGLRR (97 aa). Residues 45–78 show a composition bias toward low complexity; that stretch reads STSSSSSSSSASCASSSSNSVSASAGACKSAASS. The segment at residues 100 to 194 is a DNA-binding region (fork-head); the sequence is KPPYSYIALI…EEGSFRRRPR (95 aa). 3 disordered regions span residues 257–278, 304–325, and 340–371; these read AGAP…HMSP, GGGG…SPAM, and AHWS…GLHP. A compositionally biased stretch (basic residues) spans 263 to 274; sequence AHPHHLHHHHVP. The segment covering 311 to 325 has biased composition (low complexity); sequence GPDSSSSPVPSSPAM.

As to quaternary structure, interacts with the transcription factors TBP and TFIIB. In terms of tissue distribution, uniquely expressed in the bronchiolar epithelium and in type II pneumocytes.

It is found in the nucleus. Probable transcription activator for a number of lung-specific genes. Mediates up-regulation of the E3 ligase IRF2BPL and drives ubiquitination and degradation of CTNNB1. The sequence is that of Forkhead box protein F2 (Foxf2) from Mus musculus (Mouse).